A 155-amino-acid chain; its full sequence is UPF0260 protein R01011 (155 aa).

The protein belongs to the UPF0260 family.

This chain is UPF0260 protein R01011, found in Rhizobium meliloti (strain 1021) (Ensifer meliloti).